The sequence spans 139 residues: MRIMGLDVGSKTVGVAISDPLGFTAQGLEIIPIDEEKGEFGLERLTELVEQYKVDKFVVGLPKNMNNTSGPRVEASQAYGDLLTERYKLPVDYQDERLTTVAAERMLIEQADISRGKRKKVIDKLAAQLILQNYLDRTF.

It belongs to the YqgF nuclease family.

The protein localises to the cytoplasm. Could be a nuclease involved in processing of the 5'-end of pre-16S rRNA. In Streptococcus suis (strain 98HAH33), this protein is Putative pre-16S rRNA nuclease.